The chain runs to 84 residues: Envelope small membrane protein (84 aa).

Topologically, residues 1–18 (MFMADAYFADTVWYVGQI) are virion surface. A helical membrane pass occupies residues 19 to 39 (IFIVAICLLVIIVVVAFLATF). Residues 40-80 (KLCIQLCGMCNTLVLSPSIYVFNRGRQFYEFYNDVKPPVLD) are Intravirion-facing.

The protein belongs to the betacoronaviruses E protein family. As to quaternary structure, homopentamer. Interacts with membrane protein M in the budding compartment of the host cell, which is located between endoplasmic reticulum and the Golgi complex. Interacts with Nucleoprotein.

The protein localises to the host Golgi apparatus membrane. In terms of biological role, plays a central role in virus morphogenesis and assembly. Acts as a viroporin and self-assembles in host membranes forming pentameric protein-lipid pores that allow ion transport. Also plays a role in the induction of apoptosis. The chain is Envelope small membrane protein from Bovine coronavirus (strain 98TXSF-110-ENT) (BCoV-ENT).